We begin with the raw amino-acid sequence, 61 residues long: Small ribosomal subunit protein uS14B (61 aa).

4 residues coordinate Zn(2+): cysteine 24, cysteine 27, cysteine 40, and cysteine 43.

Belongs to the universal ribosomal protein uS14 family. Zinc-binding uS14 subfamily. In terms of assembly, part of the 30S ribosomal subunit. Contacts proteins S3 and S10. Zn(2+) serves as cofactor.

Binds 16S rRNA, required for the assembly of 30S particles and may also be responsible for determining the conformation of the 16S rRNA at the A site. In Salinispora arenicola (strain CNS-205), this protein is Small ribosomal subunit protein uS14B.